An 84-amino-acid chain; its full sequence is MNYLVMISFALLLMTGVESVRDAYIAKPHNCVYECARNEYCNDLCTKNGAKSGYCQWVGKYGNGCWCKELPDNVPIRVPGKCHR.

The first 19 residues, 1–19, serve as a signal peptide directing secretion; the sequence is MNYLVMISFALLLMTGVES. One can recognise an LCN-type CS-alpha/beta domain in the interval 21-83; that stretch reads RDAYIAKPHN…VPIRVPGKCH (63 aa). 4 disulfide bridges follow: cysteine 31–cysteine 82, cysteine 35–cysteine 55, cysteine 41–cysteine 65, and cysteine 45–cysteine 67. Residue arginine 84 is a propeptide, removed by a carboxypeptidase.

Belongs to the long (4 C-C) scorpion toxin superfamily. Sodium channel inhibitor family. Alpha subfamily. In terms of tissue distribution, expressed by the venom gland.

It is found in the secreted. Its function is as follows. Alpha toxins bind voltage-independently at site-3 of sodium channels (Nav) and inhibit the inactivation of the activated channels, thereby blocking neuronal transmission. In Olivierus martensii (Manchurian scorpion), this protein is Toxin BmKaTx16.